The primary structure comprises 161 residues: Regulator of ribonuclease activity A (161 aa).

This sequence belongs to the RraA family. As to quaternary structure, homotrimer. Binds to both RNA-binding sites in the C-terminal region of Rne and to RhlB.

It localises to the cytoplasm. Its function is as follows. Globally modulates RNA abundance by binding to RNase E (Rne) and regulating its endonucleolytic activity. Can modulate Rne action in a substrate-dependent manner by altering the composition of the degradosome. Modulates RNA-binding and helicase activities of the degradosome. The sequence is that of Regulator of ribonuclease activity A from Shewanella denitrificans (strain OS217 / ATCC BAA-1090 / DSM 15013).